Reading from the N-terminus, the 153-residue chain is Proline-rich membrane anchor 1 (153 aa).

Positions 1–35 (MLLRDLVLRHGCCWPSLLLHCALHPLWGLVQVTHA) are cleaved as a signal peptide. Over 36-92 (EPQKSCSKVTDSCQHICQCRPPPPLPPPPPPPPPPRLLSAPAPNSTSCPAEDSWWSG) the chain is Extracellular. One can recognise a PRAD domain in the interval 56–70 (PPPPLPPPPPPPPPP). A compositionally biased stretch (pro residues) spans 59-71 (PLPPPPPPPPPPR). The tract at residues 59 to 79 (PLPPPPPPPPPPRLLSAPAPN) is disordered. Residue N79 is glycosylated (N-linked (GlcNAc...) asparagine). Residues 93-113 (LVIIVAVVCASLVFLTVLVII) traverse the membrane as a helical segment. Residues 114 to 153 (CYKAIKRKPLRKDENGASVAEYPMSSSPSNKGVDVNAAVV) are Cytoplasmic-facing. The segment at 133 to 153 (AEYPMSSSPSNKGVDVNAAVV) is disordered.

In terms of assembly, interacts with ACHE, probably through disulfide bonds. As to expression, isoforms 1 and 2 are expressed in the adult brain. In matured cortical neurons, only isoform 1 is detectable.

Its subcellular location is the cell membrane. The protein localises to the cell junction. It localises to the synapse. Its function is as follows. Required to anchor acetylcholinesterase (ACHE) to the basal lamina of the neuromuscular junction and to the membrane of neuronal synapses in brain. Organizes ACHE into tetramers. In Rattus norvegicus (Rat), this protein is Proline-rich membrane anchor 1 (Prima1).